An 88-amino-acid polypeptide reads, in one-letter code: Sapecin-B (88 aa).

The N-terminal stretch at 1 to 24 (MKFLTSLLLLFVVVMVSAVNLSMA) is a signal peptide. The propeptide occupies 25–54 (KESANQLTERLQELDGAAIQEPAELNRHKR). 3 cysteine pairs are disulfide-bonded: cysteine 57-cysteine 78, cysteine 64-cysteine 84, and cysteine 68-cysteine 86.

It belongs to the invertebrate defensin family. Type 1 subfamily. Hemocytes and fat body.

It is found in the secreted. Sapecins, which are potent bactericidal proteins, are produced in response to injury. Sapecin B is cytotoxic to Gram-positive bacteria. In Sarcophaga peregrina (Flesh fly), this protein is Sapecin-B.